A 434-amino-acid chain; its full sequence is Trigger factor (434 aa).

The region spanning G160–P245 is the PPIase FKBP-type domain.

This sequence belongs to the FKBP-type PPIase family. Tig subfamily.

It localises to the cytoplasm. It carries out the reaction [protein]-peptidylproline (omega=180) = [protein]-peptidylproline (omega=0). Its function is as follows. Involved in protein export. Acts as a chaperone by maintaining the newly synthesized protein in an open conformation. Functions as a peptidyl-prolyl cis-trans isomerase. The chain is Trigger factor from Shewanella denitrificans (strain OS217 / ATCC BAA-1090 / DSM 15013).